Reading from the N-terminus, the 453-residue chain is Beta-agarase AgaB34 (453 aa).

The N-terminal stretch at 1 to 23 (MKGFTKHSILMACSIGLAINATA) is a signal peptide. One can recognise a GH16 domain in the interval 24–301 (ADWDNIPIPA…WIRVYKPTGG (278 aa)). Glu-147 (nucleophile) is an active-site residue. The active-site Proton donor is Glu-152. Residues 313-453 (PSGYTNLQLA…GATNQRFKFL (141 aa)) form the Ricin B-type lectin domain. 3 disulfide bridges follow: Cys-327–Cys-346, Cys-375–Cys-394, and Cys-423–Cys-442.

It belongs to the glycosyl hydrolase 16 family.

The protein resides in the secreted. The enzyme catalyses Hydrolysis of (1-&gt;4)-beta-D-galactosidic linkages in agarose, giving the tetramer as the predominant product.. In Agarivorans albus, this protein is Beta-agarase AgaB34.